The chain runs to 207 residues: Ribosomal RNA small subunit methyltransferase G (207 aa).

Residues glycine 73, leucine 78, 124–125 (VE), and arginine 139 each bind S-adenosyl-L-methionine.

Belongs to the methyltransferase superfamily. RNA methyltransferase RsmG family.

The protein resides in the cytoplasm. The catalysed reaction is guanosine(527) in 16S rRNA + S-adenosyl-L-methionine = N(7)-methylguanosine(527) in 16S rRNA + S-adenosyl-L-homocysteine. Specifically methylates the N7 position of guanine in position 527 of 16S rRNA. This is Ribosomal RNA small subunit methyltransferase G from Escherichia coli O1:K1 / APEC.